The following is a 457-amino-acid chain: Probable ubiquitin carboxyl-terminal hydrolase 16 (457 aa).

The interval 34-97 is disordered; sequence VSSPSVPEGT…DGANDFVDED (64 aa). Polar residues predominate over residues 45–67; sequence TVLNNPKQSTVSRKSFSAPTSPT. Ser-61 is subject to Phosphoserine. Thr-64 is modified (phosphothreonine). Ser-65 bears the Phosphoserine mark. The USP domain maps to 125-429; that stretch reads PGLVNLGNTC…QAYILQYKRK (305 aa). Cys-134 functions as the Nucleophile in the catalytic mechanism. The active-site Proton acceptor is the His-388. The tract at residues 434-457 is disordered; that stretch reads SKHKLNTENTVTKTSNKKRRKISF. A compositionally biased stretch (basic residues) spans 448-457; the sequence is SNKKRRKISF.

Belongs to the peptidase C19 family.

It catalyses the reaction Thiol-dependent hydrolysis of ester, thioester, amide, peptide and isopeptide bonds formed by the C-terminal Gly of ubiquitin (a 76-residue protein attached to proteins as an intracellular targeting signal).. The protein is Probable ubiquitin carboxyl-terminal hydrolase 16 (ubp16) of Schizosaccharomyces pombe (strain 972 / ATCC 24843) (Fission yeast).